The chain runs to 177 residues: N-acetylmuramoyl-L-alanine amidase A (177 aa).

Residues 23-158 (QTSAVIMHTM…SGNENRYDPG (136 aa)) form the N-acetylmuramoyl-L-alanine amidase domain. Cys-114 and Cys-121 form a disulfide bridge.

The protein resides in the secreted. The catalysed reaction is Hydrolyzes the link between N-acetylmuramoyl residues and L-amino acid residues in certain cell-wall glycopeptides.. In terms of biological role, antibacterial activity against Gram-positive bacteria M.luteus, S.aureus, E.faecalis and P.acidilactici and Gram-negative bacterium E.coli. The sequence is that of N-acetylmuramoyl-L-alanine amidase A (cwhA) from Achromobacter lyticus.